The following is a 257-amino-acid chain: Aquaporin TIP4-2 (257 aa).

2 helical membrane-spanning segments follow: residues 32-52 and 63-83; these read LVLT…AGAG and TLAA…TAGF. The NPA 1 signature appears at 91-93; that stretch reads NPA. 3 helical membrane passes run 107-127, 150-170, and 178-198; these read LRAL…CILL, GLVM…AMIL, and TIGP…GGNF. Positions 204 to 206 match the NPA 2 motif; the sequence is NPA. A helical transmembrane segment spans residues 225–245; it reads WIGPLLGGSLAGFVYESLFMV.

Belongs to the MIP/aquaporin (TC 1.A.8) family. TIP (TC 1.A.8.10) subfamily.

The protein localises to the vacuole membrane. In terms of biological role, aquaporins facilitate the transport of water and small neutral solutes across cell membranes. The chain is Aquaporin TIP4-2 (TIP4-2) from Zea mays (Maize).